A 492-amino-acid polypeptide reads, in one-letter code: Glutamyl-tRNA(Gln) amidotransferase subunit B, mitochondrial (492 aa).

It belongs to the GatB/GatE family. GatB subfamily. In terms of assembly, subunit of the heterotrimeric GatFAB amidotransferase (AdT) complex, composed of A, B and F subunits.

Its subcellular location is the mitochondrion. The catalysed reaction is L-glutamyl-tRNA(Gln) + L-glutamine + ATP + H2O = L-glutaminyl-tRNA(Gln) + L-glutamate + ADP + phosphate + H(+). In terms of biological role, allows the formation of correctly charged Gln-tRNA(Gln) through the transamidation of misacylated Glu-tRNA(Gln) in the mitochondria. The reaction takes place in the presence of glutamine and ATP through an activated gamma-phospho-Glu-tRNA(Gln). The polypeptide is Glutamyl-tRNA(Gln) amidotransferase subunit B, mitochondrial (Komagataella phaffii (strain GS115 / ATCC 20864) (Yeast)).